The sequence spans 428 residues: MASIEQVGAREILDSRGNPTVEVEVLLEDGSFARAAVPSGASTGEHEAVELRDGGARYGGKGVEKAVEAVLGEIAPAIIGIDATEQRTVDQALLDADGTPDKSRLGANALLGASLAVARAAAESSGLELFRYVGGPNAHVLPVPMMNILNGGAHADTGVDVQEFMVAPIGAPSFKESLRWGAEVYHSLKSVLKEKGLSTGLGDEGGFAPDVAGTKEALDLITIAVNKTGLKLGTDVALALDVAATEFYTDGTGYKFEGKNRTAAEMAAFYAELIDAYPLVSIEDPLDEDDWDGWVALTDQIGNKVQLVGDDLFVTNPERLEEGIVKGAANALLVKVNQIGTLTETLDAVDLAHRNGYKTMMSHRSGETEDTTIADLAVAVGSGQIKTGAPARSERVAKYNQLLRIEENLGDAARYAGEVAFPRFAFEA.

Residue glutamine 162 coordinates (2R)-2-phosphoglycerate. The active-site Proton donor is glutamate 204. Mg(2+) is bound by residues aspartate 241, glutamate 283, and aspartate 310. 4 residues coordinate (2R)-2-phosphoglycerate: lysine 335, arginine 364, serine 365, and lysine 386. Lysine 335 functions as the Proton acceptor in the catalytic mechanism.

Belongs to the enolase family. Mg(2+) serves as cofactor.

Its subcellular location is the cytoplasm. The protein resides in the secreted. It localises to the cell surface. The enzyme catalyses (2R)-2-phosphoglycerate = phosphoenolpyruvate + H2O. The protein operates within carbohydrate degradation; glycolysis; pyruvate from D-glyceraldehyde 3-phosphate: step 4/5. Catalyzes the reversible conversion of 2-phosphoglycerate (2-PG) into phosphoenolpyruvate (PEP). It is essential for the degradation of carbohydrates via glycolysis. In Rhodococcus erythropolis (strain PR4 / NBRC 100887), this protein is Enolase.